Reading from the N-terminus, the 127-residue chain is MENNPSSKIEVAVSSRFLDQQSNRNEGRYVFAYTIRIYNAGNVPARLIARHWQITDANGKVEYVTGEGVIGEQPRLRPGEEFRYTSGVVLGTEQGQMQGHYDMMADDGTEFTATISPFVLSVPRTLH.

In terms of domain architecture, ApaG spans 3–127 (NNPSSKIEVA…FVLSVPRTLH (125 aa)).

The protein is Protein ApaG of Xylella fastidiosa (strain M23).